Reading from the N-terminus, the 287-residue chain is Arylamine N-acetyltransferase, liver isozyme (287 aa).

Residue cysteine 68 is the Acyl-thioester intermediate of the active site. Residues histidine 107 and aspartate 122 contribute to the active site.

This sequence belongs to the arylamine N-acetyltransferase family.

The catalysed reaction is an arylamine + acetyl-CoA = an N-acetylarylamine + CoA. In Gallus gallus (Chicken), this protein is Arylamine N-acetyltransferase, liver isozyme.